The primary structure comprises 1080 residues: MPKRTDLKTILIIGAGPIVIGQACEFDYSGAQACKALRDEGYRVVLVNSNPATIMTDPNMADAVYIEPINWQTVEKIIAKEKPDALLPTMGGQTALNCALDLADHGVLEKYNVELIGAKREAIRMAEDRELFRVAMGEIGLDCPRAEVAHTLEEALDIQTRVGYPTIIRPSFTLGGSGGGIAYNREELIDIVGRGLELSPTTEVLVEESVLGWKEFEMEVVRDTADNCIIVCAIENLDPMGVHTGDSITVAPAQTLTDKEYQRLRDASIAVLRKIGVDTGGSNVQFGISPTTGRVVVIEMNPRVSRSSALASKATGFPIAKVAAKLAVGYTLDELKNEITGGLTPASFEPSIDYVVTKIPRFAFEKFPQADARLTTQMKSVGEVMAMGRTFQESLQKALRGLETGKIGLDPTGLDLGSEDDMAALKRELKAPGPERLFYVGDAFRAGMSVADVYALSFIDPWFLDQIEELISLEQQLADDGMAALDAPRLRLLKRAGFSDARLAELIGTNEEAVRTLRRALKVRPVYKRVDSCAAEFATSTAYLYSTYEDECEALPSNRDKIMILGGGPNRIGQGIEFDYCCVHAALALRDDGFETIMVNCNPETVSTDYDTSDRLYFEPLTLEDVLEIVELEQPKGVIVQYGGQTPLKLARALEANGVPVIGTSPDSIDLAEDRERFQQLVDKLGLKQPPNRIARNADEALVLAREIGYPLVVRPSYVLGGRAMEIVYGESDLARYVRDAVKVSNDSPVLLDRFLDNAVEVDVDIIADKDGNVLIGGVMEHIEEAGVHSGDSSCSLPPYSLSAETQAELRRQVVMLAEGLNVVGLMNTQFAVQVNDAGDDIVYLLEVNPRASRTVPFVSKATGMPLAKIAARCMAGKTLAEQGATKEIVPDYYSVKEAIFPFAKFQGVDPILGPEMRSTGEVMGVGRSFGAAFARAQEAGGIKAPPLGKAFVSVRDPDKQRVLPVAQALVERGFTLVATRGTGAWLQQHGLSCEIVNKVAEGRPHIVDSIKNGEIVYIVNTTEGRAAISDSFSIRREALQHRVTYSTTVAGAKALVHSLEFRGTGPVWSLQELHKELEA.

The carboxyphosphate synthetic domain stretch occupies residues 1 to 403; sequence MPKRTDLKTI…SLQKALRGLE (403 aa). Arg-129, Arg-169, Gly-175, Gly-176, Glu-208, Val-210, Glu-215, Gly-241, Val-242, His-243, Gln-285, and Glu-299 together coordinate ATP. Residues 133 to 328 form the ATP-grasp 1 domain; that stretch reads RVAMGEIGLD…IAKVAAKLAV (196 aa). The Mg(2+) site is built by Gln-285, Glu-299, and Asn-301. The Mn(2+) site is built by Gln-285, Glu-299, and Asn-301. The tract at residues 404-554 is oligomerization domain; the sequence is TGKIGLDPTG…YSTYEDECEA (151 aa). A carbamoyl phosphate synthetic domain region spans residues 555–942; the sequence is LPSNRDKIMI…AFARAQEAGG (388 aa). Residues 679 to 876 enclose the ATP-grasp 2 domain; sequence QQLVDKLGLK…LAKIAARCMA (198 aa). The ATP site is built by Arg-715, Arg-754, Leu-756, Glu-761, Gly-787, Val-788, His-789, Ser-790, Gln-830, and Glu-847. 3 residues coordinate Mg(2+): Gln-830, Glu-847, and Asn-849. 3 residues coordinate Mn(2+): Gln-830, Glu-847, and Asn-849. Residues 943–1080 form the MGS-like domain; sequence IKAPPLGKAF…LQELHKELEA (138 aa). Residues 943–1080 form an allosteric domain region; it reads IKAPPLGKAF…LQELHKELEA (138 aa).

This sequence belongs to the CarB family. As to quaternary structure, composed of two chains; the small (or glutamine) chain promotes the hydrolysis of glutamine to ammonia, which is used by the large (or ammonia) chain to synthesize carbamoyl phosphate. Tetramer of heterodimers (alpha,beta)4. Requires Mg(2+) as cofactor. It depends on Mn(2+) as a cofactor.

The enzyme catalyses hydrogencarbonate + L-glutamine + 2 ATP + H2O = carbamoyl phosphate + L-glutamate + 2 ADP + phosphate + 2 H(+). It carries out the reaction hydrogencarbonate + NH4(+) + 2 ATP = carbamoyl phosphate + 2 ADP + phosphate + 2 H(+). It participates in amino-acid biosynthesis; L-arginine biosynthesis; carbamoyl phosphate from bicarbonate: step 1/1. It functions in the pathway pyrimidine metabolism; UMP biosynthesis via de novo pathway; (S)-dihydroorotate from bicarbonate: step 1/3. Functionally, large subunit of the glutamine-dependent carbamoyl phosphate synthetase (CPSase). CPSase catalyzes the formation of carbamoyl phosphate from the ammonia moiety of glutamine, carbonate, and phosphate donated by ATP, constituting the first step of 2 biosynthetic pathways, one leading to arginine and/or urea and the other to pyrimidine nucleotides. The large subunit (synthetase) binds the substrates ammonia (free or transferred from glutamine from the small subunit), hydrogencarbonate and ATP and carries out an ATP-coupled ligase reaction, activating hydrogencarbonate by forming carboxy phosphate which reacts with ammonia to form carbamoyl phosphate. The polypeptide is Carbamoyl phosphate synthase large chain (Xanthomonas campestris pv. campestris (strain ATCC 33913 / DSM 3586 / NCPPB 528 / LMG 568 / P 25)).